A 329-amino-acid polypeptide reads, in one-letter code: DNA-directed RNA polymerase subunit alpha (329 aa).

Residues 1–231 are alpha N-terminal domain (alpha-NTD); that stretch reads MQNSLLKPKA…EQLAVFAQLE (231 aa). The tract at residues 249 to 329 is alpha C-terminal domain (alpha-CTD); the sequence is FDPILLRPVD…SWPPAALEKR (81 aa).

This sequence belongs to the RNA polymerase alpha chain family. As to quaternary structure, homodimer. The RNAP catalytic core consists of 2 alpha, 1 beta, 1 beta' and 1 omega subunit. When a sigma factor is associated with the core the holoenzyme is formed, which can initiate transcription.

The catalysed reaction is RNA(n) + a ribonucleoside 5'-triphosphate = RNA(n+1) + diphosphate. In terms of biological role, DNA-dependent RNA polymerase catalyzes the transcription of DNA into RNA using the four ribonucleoside triphosphates as substrates. The sequence is that of DNA-directed RNA polymerase subunit alpha from Albidiferax ferrireducens (strain ATCC BAA-621 / DSM 15236 / T118) (Rhodoferax ferrireducens).